The sequence spans 106 residues: Large ribosomal subunit protein eL42Q (106 aa).

This sequence belongs to the eukaryotic ribosomal protein eL42 family.

This is Large ribosomal subunit protein eL42Q (RIM-C) from Candida maltosa (Yeast).